The sequence spans 257 residues: Zinc transporter ZupT (257 aa).

The next 3 membrane-spanning stretches (helical) occupy residues 5–25, 32–52, and 61–81; these read LILTILAGAATFIGAFLGVLG, LLAFSLGFAAGIMLLISLMEM, and GMSPVLGYGMFIFGLLGYFGL. Positions 120 and 123 each coordinate Fe(2+). Positions 123 and 148 each coordinate Zn(2+). The next 4 membrane-spanning stretches (helical) occupy residues 137–157, 171–191, 195–215, and 236–256; these read LGFGIALAVALHNIPEGLAVA, ILWAGISGLAEILGGVLAWLI, MISPVVMAAIMAAVAGIMVAL, and GVLCGMSVMGFSLVLLQTAGI. Asn149, Glu152, and Glu181 together coordinate Fe(2+). Glu152 provides a ligand contact to Zn(2+).

It belongs to the ZIP transporter (TC 2.A.5) family. ZupT subfamily.

It localises to the cell inner membrane. It catalyses the reaction Zn(2+)(in) = Zn(2+)(out). Mediates zinc uptake. May also transport other divalent cations. In Escherichia coli O45:K1 (strain S88 / ExPEC), this protein is Zinc transporter ZupT.